Reading from the N-terminus, the 323-residue chain is Lipoyl synthase (323 aa).

The interval 1–27 (MVTILDRTSSDEKRIRHPEKAHRPDTE) is disordered. The [4Fe-4S] cluster site is built by C61, C66, C72, C87, C91, C94, and S300. In terms of domain architecture, Radical SAM core spans 73–289 (WEKKHATFMI…ETVAYAKGFL (217 aa)).

The protein belongs to the radical SAM superfamily. Lipoyl synthase family. Requires [4Fe-4S] cluster as cofactor.

The protein resides in the cytoplasm. It catalyses the reaction [[Fe-S] cluster scaffold protein carrying a second [4Fe-4S](2+) cluster] + N(6)-octanoyl-L-lysyl-[protein] + 2 oxidized [2Fe-2S]-[ferredoxin] + 2 S-adenosyl-L-methionine + 4 H(+) = [[Fe-S] cluster scaffold protein] + N(6)-[(R)-dihydrolipoyl]-L-lysyl-[protein] + 4 Fe(3+) + 2 hydrogen sulfide + 2 5'-deoxyadenosine + 2 L-methionine + 2 reduced [2Fe-2S]-[ferredoxin]. It participates in protein modification; protein lipoylation via endogenous pathway; protein N(6)-(lipoyl)lysine from octanoyl-[acyl-carrier-protein]: step 2/2. In terms of biological role, catalyzes the radical-mediated insertion of two sulfur atoms into the C-6 and C-8 positions of the octanoyl moiety bound to the lipoyl domains of lipoate-dependent enzymes, thereby converting the octanoylated domains into lipoylated derivatives. The sequence is that of Lipoyl synthase from Agrobacterium fabrum (strain C58 / ATCC 33970) (Agrobacterium tumefaciens (strain C58)).